The sequence spans 422 residues: Serine--tRNA ligase (422 aa).

230–232 (TAE) serves as a coordination point for L-serine. 261–263 (RNE) lines the ATP pocket. Residue glutamate 284 participates in L-serine binding. 347–350 (EVSS) contributes to the ATP binding site. Position 383 (serine 383) interacts with L-serine.

This sequence belongs to the class-II aminoacyl-tRNA synthetase family. Type-1 seryl-tRNA synthetase subfamily. Homodimer. The tRNA molecule binds across the dimer.

The protein resides in the cytoplasm. The catalysed reaction is tRNA(Ser) + L-serine + ATP = L-seryl-tRNA(Ser) + AMP + diphosphate + H(+). The enzyme catalyses tRNA(Sec) + L-serine + ATP = L-seryl-tRNA(Sec) + AMP + diphosphate + H(+). Its pathway is aminoacyl-tRNA biosynthesis; selenocysteinyl-tRNA(Sec) biosynthesis; L-seryl-tRNA(Sec) from L-serine and tRNA(Sec): step 1/1. Catalyzes the attachment of serine to tRNA(Ser). Is also able to aminoacylate tRNA(Sec) with serine, to form the misacylated tRNA L-seryl-tRNA(Sec), which will be further converted into selenocysteinyl-tRNA(Sec). This is Serine--tRNA ligase from Herpetosiphon aurantiacus (strain ATCC 23779 / DSM 785 / 114-95).